We begin with the raw amino-acid sequence, 262 residues long: MKAVVLTLAVLFLTGSQARHFWQQDEPQSSWDRVKDFATVYVEAIKDSGRDYVAQFEASALGKQLNLKLLDNWDTLASTLSKVREQLGPVTQEFWDNLEKETAALRQEMNKDLEEVKQKVQPYLDEFQRKWHEEVEIYRQKVAPLGEEFREGARQKVQELQDRLSPLAQELRDRARAHVEKQLAPYSDDLRQRLTARLEALKEGGGSLAEYHAKATEQLKALGEKAKPALEDLRQGLMPVLESLKVSILAAIDEASKKLNAQ.

Residues 1–18 form the signal peptide; sequence MKAVVLTLAVLFLTGSQA. Tandem repeats lie at residues 67-88 and 89-110. The 10 X approximate tandem repeats stretch occupies residues 67 to 262; it reads LKLLDNWDTL…DEASKKLNAQ (196 aa). Residue methionine 109 is modified to Methionine sulfoxide. The stretch at 111 to 121 is one 3; half-length repeat; it reads KDLEEVKQKVQ. A run of 5 repeats spans residues 122–142, 144–165, 166–184, 185–206, and 207–227. The stretch at 228–238 is one 9; half-length repeat; it reads PALEDLRQGLM. Methionine 238 carries the methionine sulfoxide modification. Copy 10 of the repeat occupies 239–262; the sequence is PVLESLKVSILAAIDEASKKLNAQ.

The protein belongs to the apolipoprotein A1/A4/E family. Homodimer. Interacts with APOA1BP and CLU. Component of a sperm activating protein complex (SPAP), consisting of APOA1, an immunoglobulin heavy chain, an immunoglobulin light chain and albumin. Interacts with NDRG1. Interacts with SCGB3A2. Interacts with NAXE and YJEFN3. In terms of processing, glycosylated. Post-translationally, palmitoylated. Phosphorylation sites are present in the extracellular medium. As to expression, major protein of plasma HDL, also found in chylomicrons.

The protein resides in the secreted. In terms of biological role, participates in the reverse transport of cholesterol from tissues to the liver for excretion by promoting cholesterol efflux from tissues and by acting as a cofactor for the lecithin cholesterol acyltransferase (LCAT). As part of the SPAP complex, activates spermatozoa motility. The sequence is that of Apolipoprotein A-I (APOA1) from Pantholops hodgsonii (Chiru).